Reading from the N-terminus, the 316-residue chain is Transaldolase (316 aa).

Catalysis depends on lysine 131, which acts as the Schiff-base intermediate with substrate.

Belongs to the transaldolase family. Type 1 subfamily. As to quaternary structure, homodimer.

It is found in the cytoplasm. It catalyses the reaction D-sedoheptulose 7-phosphate + D-glyceraldehyde 3-phosphate = D-erythrose 4-phosphate + beta-D-fructose 6-phosphate. It functions in the pathway carbohydrate degradation; pentose phosphate pathway; D-glyceraldehyde 3-phosphate and beta-D-fructose 6-phosphate from D-ribose 5-phosphate and D-xylulose 5-phosphate (non-oxidative stage): step 2/3. Functionally, transaldolase is important for the balance of metabolites in the pentose-phosphate pathway. The chain is Transaldolase from Chromohalobacter salexigens (strain ATCC BAA-138 / DSM 3043 / CIP 106854 / NCIMB 13768 / 1H11).